The sequence spans 616 residues: Glutamine--fructose-6-phosphate aminotransferase [isomerizing] (616 aa).

Cysteine 2 (nucleophile; for GATase activity) is an active-site residue. Residues 2 to 222 (CGIIGYSGPR…QERIVALSGD (221 aa)) form the Glutamine amidotransferase type-2 domain. The tract at residues 70 to 89 (TGIGHTRWATHGEPSDRNAH) is disordered. 2 consecutive SIS domains span residues 289–428 (IRDD…LRGF) and 461–606 (LAHW…VDRP). The For Fru-6P isomerization activity role is filled by lysine 611.

Homodimer.

It is found in the cytoplasm. It catalyses the reaction D-fructose 6-phosphate + L-glutamine = D-glucosamine 6-phosphate + L-glutamate. Its function is as follows. Catalyzes the first step in hexosamine metabolism, converting fructose-6P into glucosamine-6P using glutamine as a nitrogen source. This Tropheryma whipplei (strain TW08/27) (Whipple's bacillus) protein is Glutamine--fructose-6-phosphate aminotransferase [isomerizing].